Consider the following 218-residue polypeptide: Large ribosomal subunit protein uL3 (218 aa).

Residues Gly-121–Gly-163 are disordered.

Belongs to the universal ribosomal protein uL3 family. As to quaternary structure, part of the 50S ribosomal subunit. Forms a cluster with proteins L14 and L19.

Functionally, one of the primary rRNA binding proteins, it binds directly near the 3'-end of the 23S rRNA, where it nucleates assembly of the 50S subunit. This Parasynechococcus marenigrum (strain WH8102) protein is Large ribosomal subunit protein uL3.